Consider the following 251-residue polypeptide: Ubiquinone/menaquinone biosynthesis C-methyltransferase UbiE (251 aa).

S-adenosyl-L-methionine-binding positions include Thr-74, Asp-95, and 123 to 124; that span reads NA.

Belongs to the class I-like SAM-binding methyltransferase superfamily. MenG/UbiE family.

It catalyses the reaction a 2-demethylmenaquinol + S-adenosyl-L-methionine = a menaquinol + S-adenosyl-L-homocysteine + H(+). The catalysed reaction is a 2-methoxy-6-(all-trans-polyprenyl)benzene-1,4-diol + S-adenosyl-L-methionine = a 5-methoxy-2-methyl-3-(all-trans-polyprenyl)benzene-1,4-diol + S-adenosyl-L-homocysteine + H(+). It participates in quinol/quinone metabolism; menaquinone biosynthesis; menaquinol from 1,4-dihydroxy-2-naphthoate: step 2/2. It functions in the pathway cofactor biosynthesis; ubiquinone biosynthesis. Functionally, methyltransferase required for the conversion of demethylmenaquinol (DMKH2) to menaquinol (MKH2) and the conversion of 2-polyprenyl-6-methoxy-1,4-benzoquinol (DDMQH2) to 2-polyprenyl-3-methyl-6-methoxy-1,4-benzoquinol (DMQH2). The polypeptide is Ubiquinone/menaquinone biosynthesis C-methyltransferase UbiE (Psychromonas ingrahamii (strain DSM 17664 / CCUG 51855 / 37)).